The following is a 361-amino-acid chain: Peptide chain release factor 1 (361 aa).

At Gln237 the chain carries N5-methylglutamine. The interval 283-307 (AQQQEQQEQQSSTRKELIGSGDRSQ) is disordered.

Belongs to the prokaryotic/mitochondrial release factor family. Methylated by PrmC. Methylation increases the termination efficiency of RF1.

Its subcellular location is the cytoplasm. Functionally, peptide chain release factor 1 directs the termination of translation in response to the peptide chain termination codons UAG and UAA. The sequence is that of Peptide chain release factor 1 from Vesicomyosocius okutanii subsp. Calyptogena okutanii (strain HA).